The primary structure comprises 166 residues: MANVEAQTGELIEKLITVNRVAKVVKGGRIFSFTALTVVGDGKGKVGFGYGKAREVPAAIQKAMEKARRNMVTVQLKGDTLQHPVKGRHSGSQVYMQPASEGTGIIAGGAMRAVLEVSGVHNVLSKAYGSTNPINVVRATIKALNGMKSPEQVAAKRGLRVDEILG.

The S5 DRBM domain occupies 11 to 74; that stretch reads LIEKLITVNR…EKARRNMVTV (64 aa).

The protein belongs to the universal ribosomal protein uS5 family. As to quaternary structure, part of the 30S ribosomal subunit. Contacts proteins S4 and S8.

In terms of biological role, with S4 and S12 plays an important role in translational accuracy. Located at the back of the 30S subunit body where it stabilizes the conformation of the head with respect to the body. The protein is Small ribosomal subunit protein uS5 of Idiomarina loihiensis (strain ATCC BAA-735 / DSM 15497 / L2-TR).